A 446-amino-acid chain; its full sequence is Glutamine synthetase (446 aa).

Positions 18–103 (ENVRYLRLQF…LICDVYKTDG (86 aa)) constitute a GS beta-grasp domain. One can recognise a GS catalytic domain in the interval 110-446 (PRANLKRVLK…WERDQYMKQY (337 aa)). 2 residues coordinate Mg(2+): E134 and E136. E186 contributes to the ATP binding site. Mg(2+) is bound by residues E191 and E198. L-glutamate-binding positions include 242–243 (NG) and G243. H247 provides a ligand contact to Mg(2+). S251 contacts ATP. Residues R300, E306, and R318 each contribute to the L-glutamate site. 2 residues coordinate ATP: R318 and R323. E335 contacts Mg(2+). An L-glutamate-binding site is contributed by R337.

It belongs to the glutamine synthetase family. Oligomer of 12 subunits arranged in the form of two hexagons. In its feedback-inhibited form, interacts with TnrA in order to block its DNA-binding activity. It depends on Mg(2+) as a cofactor.

It localises to the cytoplasm. It catalyses the reaction L-glutamate + NH4(+) + ATP = L-glutamine + ADP + phosphate + H(+). With respect to regulation, inhibited by glutamine. Glutamine synthetase (GS) is an unusual multitasking protein that functions as an enzyme, a transcription coregulator, and a chaperone in ammonium assimilation and in the regulation of genes involved in nitrogen metabolism. It catalyzes the ATP-dependent biosynthesis of glutamine from glutamate and ammonia. Feedback-inhibited GlnA also interacts with and regulates the activity of the transcriptional regulator TnrA. During nitrogen limitation, TnrA is in its DNA-binding active state and turns on the transcription of genes required for nitrogen assimilation. Under conditions of nitrogen excess, feedback-inhibited GlnA forms a stable complex with TnrA, which inhibits its DNA-binding activity. In contrast, feedback-inhibited GlnA acts as a chaperone to stabilize the DNA-binding activity of GlnR, which represses the transcription of nitrogen assimilation genes. This is Glutamine synthetase from Staphylococcus aureus (strain N315).